Consider the following 407-residue polypeptide: RNA-binding motif, single-stranded-interacting protein 2 (407 aa).

Methionine 1 carries the N-acetylmethionine modification. The tract at residues 29-54 (QQMAPPSPSNSTPNSSSGSNGNDQLS) is disordered. Low complexity predominate over residues 37–50 (SNSTPNSSSGSNGN). RRM domains lie at 56–129 (TNLY…MAKQ) and 135–220 (TNLY…FADG). Serine 106 carries the phosphoserine modification. Position 269 is a phosphothreonine (threonine 269). Serine 280 and serine 285 each carry phosphoserine.

It is found in the nucleus. This is RNA-binding motif, single-stranded-interacting protein 2 (RBMS2) from Homo sapiens (Human).